A 467-amino-acid chain; its full sequence is Dimethylamine methyltransferase MtbB1 (467 aa).

Position 356 (Pyl356) is a non-standard amino acid, pyrrolysine.

Belongs to the dimethylamine methyltransferase family. In terms of assembly, may form homotetramers or homopentamers.

The catalysed reaction is Co(I)-[dimethylamine-specific corrinoid protein] + dimethylamine + H(+) = methyl-Co(III)-[dimethylamine-specific corrinoid protein] + methylamine. Its pathway is one-carbon metabolism; methanogenesis from dimethylamine. Catalyzes the transfer of a methyl group from dimethylamine to the corrinoid cofactor of MtbC. The major or perhaps only DMA methyltransferase expressed under inducing conditions. The protein is Dimethylamine methyltransferase MtbB1 of Methanosarcina barkeri.